A 150-amino-acid polypeptide reads, in one-letter code: Transcriptional regulator MraZ (150 aa).

SpoVT-AbrB domains follow at residues 9 to 54 (QSIH…PPEE) and 83 to 126 (AEEC…NKST).

The protein belongs to the MraZ family. In terms of assembly, forms oligomers.

The protein resides in the cytoplasm. Its subcellular location is the nucleoid. This is Transcriptional regulator MraZ from Syntrophobacter fumaroxidans (strain DSM 10017 / MPOB).